We begin with the raw amino-acid sequence, 257 residues long: Asnovolin H dehydrogenase nvfC (257 aa).

A helical membrane pass occupies residues 7–26 (YVLIITGSASGIGLATATIA). Ile-11 contacts NADP(+). Residues Asn-57, Asn-92, and Asn-110 are each glycosylated (N-linked (GlcNAc...) asparagine). NADP(+)-binding residues include Arg-119, Tyr-151, Lys-155, and Val-184. Residue Tyr-151 is the Proton donor of the active site. Lys-155 functions as the Lowers pKa of active site Tyr in the catalytic mechanism.

Belongs to the short-chain dehydrogenases/reductases (SDR) family.

It is found in the membrane. The enzyme catalyses asnovolin H + A = chermesin D + AH2. It functions in the pathway secondary metabolite biosynthesis; terpenoid biosynthesis. Short chain dehydrogenase; part of the gene cluster that mediates the biosynthesis of novofumigatonin, a heavily oxygenated meroterpenoid containing a unique orthoester moiety. The first step of the pathway is the synthesis of 3,5-dimethylorsellinic acid (DMOA) by the polyketide synthase nvfA via condensation of one acetyl-CoA starter unit with 3 malonyl-CoA units and 2 methylations. DMOA is then converted to farnesyl-DMOA by the farnesyltransferase nvfB. Epoxydation by FAD-dependent monooxygenase nvfK, followed by a protonation-initiated cyclization catalyzed by the terpene cyclase nvfL leads to the production of asnavolin H. The short chain dehydrogenase nvfC then as a 3-OH dehydrogenase of asnovolin H to yield chemesin D. There are two branches to synthesize asnovolin A from chemesin D. In one branch, chemesin D undergoes Baeyer-Villiger oxidation by nvfH, methylation by nvfJ, and enoyl reduction by the nvfM D enoylreductase that reduces the double bond between C-5'and C-6', to form respectively asnovolin I, asnovolin K, and asnovolin A. In the other branch, the methylation precedes the Baeyer-Villiger oxidation and the enoyl reduction to yield asnovolin A via the asnovolin J intermediate. Asnovolin A is further converted to fumigatonoid A by the Fe(II)/2-oxoglutarate-dependent dioxygenase nvfI that catalyzes an endoperoxidation reaction. The alpha/beta hydrolase nvfD then acts as an epimerase that converts fumigatonoid A to its C-5' epimer, which then undergoes spontaneous or nvfD-catalyzed lactonization. The following step utilizes the ketoreductase nvfG to produce fumigatonoid B. The dioxygenase nvfE further converts fumigatonoid B into fumigatonoid C. Finally the Fe(II)/2-oxoglutarate-dependent dioxygenase nvfF catalyzes two rounds of oxidation to transform fumigatonoid C into the end product, novofumigatonin A. In Aspergillus novofumigatus (strain IBT 16806), this protein is Asnovolin H dehydrogenase nvfC.